The chain runs to 156 residues: Small ribosomal subunit protein uS7 (156 aa).

It belongs to the universal ribosomal protein uS7 family. Part of the 30S ribosomal subunit. Contacts proteins S9 and S11.

Functionally, one of the primary rRNA binding proteins, it binds directly to 16S rRNA where it nucleates assembly of the head domain of the 30S subunit. Is located at the subunit interface close to the decoding center, probably blocks exit of the E-site tRNA. The polypeptide is Small ribosomal subunit protein uS7 (Janthinobacterium sp. (strain Marseille) (Minibacterium massiliensis)).